A 288-amino-acid chain; its full sequence is Ribonuclease HIII (288 aa).

One can recognise an RNase H type-2 domain in the interval 76–288 (YSAIGSDEVG…KNITKQFIKN (213 aa)). A divalent metal cation contacts are provided by Asp-82, Glu-83, and Asp-185.

The protein belongs to the RNase HII family. RnhC subfamily. Mn(2+) serves as cofactor. Requires Mg(2+) as cofactor.

It localises to the cytoplasm. The enzyme catalyses Endonucleolytic cleavage to 5'-phosphomonoester.. Functionally, endonuclease that specifically degrades the RNA of RNA-DNA hybrids. This Phytoplasma mali (strain AT) protein is Ribonuclease HIII.